The sequence spans 470 residues: Zinc finger protein weckle (470 aa).

A required for homodimerization region spans residues 1–103 (MGVPTSDWIY…DALRLEYGLP (103 aa)). One can recognise a ZAD domain in the interval 10–82 (YWCRLCARDD…SKVQAIFELL (73 aa)). Residues cysteine 12, cysteine 15, cysteine 55, and cysteine 58 each coordinate Zn(2+). A disordered region spans residues 156-265 (NSDPKVLASP…LSMSPHGSQS (110 aa)). Serine 168 is subject to Phosphoserine. Residues 195-208 (ESDDEEAILDEDEA) are compositionally biased toward acidic residues. Residues 214-225 (LKRKRGRPKGSG) show a composition bias toward basic residues. Over residues 237-254 (TSREPDDNAKSKQDDKTS) the composition is skewed to basic and acidic residues. A compositionally biased stretch (polar residues) spans 255 to 265 (ELSMSPHGSQS). C2H2-type zinc fingers lie at residues 271-294 (YPCK…HDMH), 300-322 (YVCD…QLVH), 328-350 (CICP…SQTH), 355-377 (FECN…KYVH), 383-405 (FKCE…LLGH), and 411-434 (YVCK…WKKH).

Homodimer. Interacts with Myd88 and Toll.

The protein localises to the cell membrane. In terms of biological role, acts as an adapter to assemble/stabilize a Toll/wek/Myd88/tube complex; required for efficient recruitment of Myd88 to Toll. Dispensable for innate immune response; plays a minimal role, if any, in the immune defense against Gram-positive bacteria and fungi. Involved in dorsoventral axis determination. The sequence is that of Zinc finger protein weckle from Drosophila melanogaster (Fruit fly).